The sequence spans 1849 residues: Brefeldin A-inhibited guanine nucleotide-exchange protein 1 (1849 aa).

A DCB; DCB:DCB and DCB:HUS domain interaction region spans residues 2–224 (YEGKKTKNMF…QEAKQMEKER (223 aa)). The segment covering 46–58 (AETEKQSPPHGEA) has biased composition (basic and acidic residues). 3 disordered regions span residues 46–65 (AETE…SSTL), 216–301 (EAKQ…ADQA), and 350–413 (INVS…SPGA). Phosphoserine occurs at positions 52, 286, 289, and 290. Composition is skewed to polar residues over residues 350-360 (INVSADGNNGT) and 394-409 (SVSS…SSGP). Phosphoserine is present on residues S397 and S410. Residues 557-577 (ADAQSVVDIYVNYDCDLNAAN) are HUS; DCB:HUS domain interaction. Residues 634–687 (PNSQTTLGQEKPSEQETSEMKHPETINRYGSLNSLESTSSSGIGSYSTQMSGTD) form a disordered region. The segment covering 644–658 (KPSEQETSEMKHPET) has biased composition (basic and acidic residues). Over residues 664-684 (SLNSLESTSSSGIGSYSTQMS) the composition is skewed to low complexity. An SEC7 domain is found at 709 to 840 (FTKKPKRGIQ…IIMLTTDLHS (132 aa)). The Nuclear localization signal (NLS) signature appears at 711 to 715 (KKPKR). 3 positions are modified to phosphoserine: S1079, S1566, and S1569.

As to quaternary structure, homodimer. Interacts with ARFGEF2/BIG2; both proteins are probably part of the same or very similar macromolecular complexes. Interacts with FKBP2. Interacts with MYO9B. Interacts with PRKAR1A and PRKAR2A. Interacts with PPP1CC. Interacts with NCL, FBL, NUP62 and U3 small nucleolar RNA. Interacts with DPY30. Interacts with PDE3A. Interacts with KANK1. Interacts with TBC1D22A and TBC1D22B. In terms of processing, phosphorylated. In vitro phosphorylated by PKA reducing its GEF activity and dephosphorylated by phosphatase PP1. In terms of tissue distribution, abundantly expressed in kidney, somewhat less abundant in lung, spleen, and brain, and still less abundant in heart.

It localises to the cytoplasm. The protein localises to the perinuclear region. Its subcellular location is the golgi apparatus. It is found in the trans-Golgi network. The protein resides in the nucleus. It localises to the nucleolus. The protein localises to the nucleus matrix. Its subcellular location is the membrane. With respect to regulation, inhibited by brefeldin A. In terms of biological role, promotes guanine-nucleotide exchange on ARF1 and ARF3. Promotes the activation of ARF1/ARF3 through replacement of GDP with GTP. Involved in vesicular trafficking. Required for the maintenance of Golgi structure; the function may be independent of its GEF activity. Required for the maturation of integrin beta-1 in the Golgi. Involved in the establishment and persistence of cell polarity during directed cell movement in wound healing. Proposed to act as A kinase-anchoring protein (AKAP) and may mediate crosstalk between Arf and PKA pathways. Inhibits GAP activity of MYO9B probably through competitive RhoA binding. The function in the nucleus remains to be determined. The protein is Brefeldin A-inhibited guanine nucleotide-exchange protein 1 (ARFGEF1) of Bos taurus (Bovine).